Reading from the N-terminus, the 213-residue chain is Small ribosomal subunit protein uS7 (213 aa).

Belongs to the universal ribosomal protein uS7 family. In terms of assembly, component of the small ribosomal subunit (SSU). Mature N.crassa ribosomes consist of a small (40S) and a large (60S) subunit. The 40S small subunit contains 1 molecule of ribosomal RNA (18S rRNA) and at least 32 different proteins. The large 60S subunit contains 3 rRNA molecules (26S, 5.8S and 5S rRNA) and at least 42 different proteins.

It localises to the cytoplasm. Its function is as follows. Component of the ribosome, a large ribonucleoprotein complex responsible for the synthesis of proteins in the cell. The small ribosomal subunit (SSU) binds messenger RNAs (mRNAs) and translates the encoded message by selecting cognate aminoacyl-transfer RNA (tRNA) molecules. The large subunit (LSU) contains the ribosomal catalytic site termed the peptidyl transferase center (PTC), which catalyzes the formation of peptide bonds, thereby polymerizing the amino acids delivered by tRNAs into a polypeptide chain. The nascent polypeptides leave the ribosome through a tunnel in the LSU and interact with protein factors that function in enzymatic processing, targeting, and the membrane insertion of nascent chains at the exit of the ribosomal tunnel. The protein is Small ribosomal subunit protein uS7 (rps-5) of Neurospora crassa (strain ATCC 24698 / 74-OR23-1A / CBS 708.71 / DSM 1257 / FGSC 987).